The chain runs to 589 residues: PTS system mannitol-specific EIICB component (589 aa).

Residues 1 to 25 (MEEKVSLKVRVQKLGTSLSNMVMPN) lie on the Cytoplasmic side of the membrane. Residues 14 to 347 (LGTSLSNMVM…LHADKSTEDS (334 aa)) form the PTS EIIC type-2 domain. A helical transmembrane segment spans residues 26–47 (IGAFIAWGVLTALFIADGYLPN). At 48–51 (EQLA) the chain is on the extracellular side. The helical transmembrane segment at 52–72 (TVVGPMLTYLLPILIGYTGGY) threads the bilayer. Residues 73–135 (MIHGQRGAVV…PGFEMLVNNF (63 aa)) are Cytoplasmic-facing. A helical transmembrane segment spans residues 136 to 157 (SAGLVGFALLLLAFYAIGPVVS). Topologically, residues 158–166 (TLTGAVGNG) are extracellular. A helical transmembrane segment spans residues 167-187 (VEAIVNARLLPMANIIIEPAK). Residues 188 to 274 (VLFLNNALNH…VMMKPTLFLA (87 aa)) are Cytoplasmic-facing. Residues 275 to 294 (AMAGGISGTFTFQLLDAGLK) form a helical membrane-spanning segment. The Extracellular portion of the chain corresponds to 295-316 (SPASPGSIIAIIATAPKGVWPH). Residues 317–338 (LNVLLGVLVAAVVSFLVAALIL) traverse the membrane as a helical segment. The Cytoplasmic portion of the chain corresponds to 339-589 (HADKSTEDSL…YDKMAARMYK (251 aa)). The PTS EIIB type-2 domain occupies 381-476 (EKIIFACDAG…SLTGASPIAE (96 aa)). C387 acts as the Phosphocysteine intermediate; for EIIB activity in catalysis. A Phosphocysteine; by EIIA modification is found at C387.

Homodimer.

The protein resides in the cell membrane. It catalyses the reaction D-mannitol(out) + N(pros)-phospho-L-histidyl-[protein] = D-mannitol 1-phosphate(in) + L-histidyl-[protein]. In terms of biological role, the phosphoenolpyruvate-dependent sugar phosphotransferase system (sugar PTS), a major carbohydrate active transport system, catalyzes the phosphorylation of incoming sugar substrates concomitantly with their translocation across the cell membrane. The enzyme II CmtAB PTS system is involved in D-mannitol transport. The chain is PTS system mannitol-specific EIICB component (mtlA) from Streptococcus pneumoniae serotype 4 (strain ATCC BAA-334 / TIGR4).